The chain runs to 29 residues: Cyclotide mden-B (29 aa).

The segment at residues 1-29 (GLPICGETCFTGKCYTPGCTCSYPICKKN) is a cross-link (cyclopeptide (Gly-Asn)). 3 disulfide bridges follow: Cys5–Cys19, Cys9–Cys21, and Cys14–Cys26.

Belongs to the cyclotide family. Moebius subfamily. This is a cyclic peptide.

In terms of biological role, probably participates in a plant defense mechanism. This Melicytus dentatus (Tree violet) protein is Cyclotide mden-B.